Reading from the N-terminus, the 222-residue chain is Uracil-DNA glycosylase (222 aa).

Catalysis depends on Asp-61, which acts as the Proton acceptor.

It belongs to the uracil-DNA glycosylase (UDG) superfamily. UNG family.

The protein localises to the cytoplasm. It catalyses the reaction Hydrolyzes single-stranded DNA or mismatched double-stranded DNA and polynucleotides, releasing free uracil.. Its function is as follows. Excises uracil residues from the DNA which can arise as a result of misincorporation of dUMP residues by DNA polymerase or due to deamination of cytosine. The sequence is that of Uracil-DNA glycosylase from Aeromonas salmonicida (strain A449).